The sequence spans 969 residues: Bifunctional glutamine synthetase adenylyltransferase/adenylyl-removing enzyme (969 aa).

The segment at 1–456 (MNWQANIHKL…HFEQLFAAPH (456 aa)) is adenylyl removase. Residues 466–969 (EKRLAEVWLG…SALLEDESAK (504 aa)) are adenylyl transferase.

The protein belongs to the GlnE family. It depends on Mg(2+) as a cofactor.

The enzyme catalyses [glutamine synthetase]-O(4)-(5'-adenylyl)-L-tyrosine + phosphate = [glutamine synthetase]-L-tyrosine + ADP. It catalyses the reaction [glutamine synthetase]-L-tyrosine + ATP = [glutamine synthetase]-O(4)-(5'-adenylyl)-L-tyrosine + diphosphate. Functionally, involved in the regulation of glutamine synthetase GlnA, a key enzyme in the process to assimilate ammonia. When cellular nitrogen levels are high, the C-terminal adenylyl transferase (AT) inactivates GlnA by covalent transfer of an adenylyl group from ATP to specific tyrosine residue of GlnA, thus reducing its activity. Conversely, when nitrogen levels are low, the N-terminal adenylyl removase (AR) activates GlnA by removing the adenylyl group by phosphorolysis, increasing its activity. The regulatory region of GlnE binds the signal transduction protein PII (GlnB) which indicates the nitrogen status of the cell. This Nitrosococcus oceani (strain ATCC 19707 / BCRC 17464 / JCM 30415 / NCIMB 11848 / C-107) protein is Bifunctional glutamine synthetase adenylyltransferase/adenylyl-removing enzyme.